The chain runs to 338 residues: MIERNWNELIRPEKPQIETGADATRKARIVAEPLERGFGVTLGNALRRVLLSSLQGAAVTAIQIDGVVHEFSSLEGVREDVVDIVLNIKQLAVRMHAEGPKRMTLRATGPGVVTAGQIETPSDIEILNPDHVLCTLDDGASVRMEFTVNTGKGYVPADKNRPEDAPIGLIAVDALYSPVKRVAYRVEPTRQGQSLDYDKLILEVETNGAVTPVDAVAYAARILQDQLQIFITFEEPKAKTADEAKPELPFNPALLKKVDELELSVRSANCLKNDNIVYIGDLIQKTEAEMLRTPNFGRKSLNEIKEVLAGMGLHLGMDVPNWPPENIEDLAKKFEDQI.

An alpha N-terminal domain (alpha-NTD) region spans residues 1–234; that stretch reads MIERNWNELI…DQLQIFITFE (234 aa). Residues 250 to 338 form an alpha C-terminal domain (alpha-CTD) region; it reads FNPALLKKVD…DLAKKFEDQI (89 aa).

The protein belongs to the RNA polymerase alpha chain family. In terms of assembly, homodimer. The RNAP catalytic core consists of 2 alpha, 1 beta, 1 beta' and 1 omega subunit. When a sigma factor is associated with the core the holoenzyme is formed, which can initiate transcription.

The enzyme catalyses RNA(n) + a ribonucleoside 5'-triphosphate = RNA(n+1) + diphosphate. Its function is as follows. DNA-dependent RNA polymerase catalyzes the transcription of DNA into RNA using the four ribonucleoside triphosphates as substrates. The protein is DNA-directed RNA polymerase subunit alpha of Caulobacter sp. (strain K31).